The following is a 426-amino-acid chain: 3-phosphoshikimate 1-carboxyvinyltransferase (426 aa).

Lysine 22, serine 23, and arginine 27 together coordinate 3-phosphoshikimate. A phosphoenolpyruvate-binding site is contributed by lysine 22. The phosphoenolpyruvate site is built by glycine 96 and arginine 124. The 3-phosphoshikimate site is built by serine 170, serine 171, glutamine 172, serine 198, aspartate 314, asparagine 337, and lysine 341. A phosphoenolpyruvate-binding site is contributed by glutamine 172. The active-site Proton acceptor is aspartate 314. Arginine 345, arginine 387, and lysine 412 together coordinate phosphoenolpyruvate.

It belongs to the EPSP synthase family. In terms of assembly, monomer.

The protein localises to the cytoplasm. It catalyses the reaction 3-phosphoshikimate + phosphoenolpyruvate = 5-O-(1-carboxyvinyl)-3-phosphoshikimate + phosphate. It participates in metabolic intermediate biosynthesis; chorismate biosynthesis; chorismate from D-erythrose 4-phosphate and phosphoenolpyruvate: step 6/7. Its function is as follows. Catalyzes the transfer of the enolpyruvyl moiety of phosphoenolpyruvate (PEP) to the 5-hydroxyl of shikimate-3-phosphate (S3P) to produce enolpyruvyl shikimate-3-phosphate and inorganic phosphate. The polypeptide is 3-phosphoshikimate 1-carboxyvinyltransferase (Shewanella pealeana (strain ATCC 700345 / ANG-SQ1)).